Reading from the N-terminus, the 601-residue chain is Elongation factor 4 (601 aa).

Residues 7–189 (DNIRNFSIVA…AIVKRLPPPK (183 aa)) form the tr-type G domain. GTP-binding positions include 19-24 (DHGKST) and 136-139 (NKVD).

Belongs to the TRAFAC class translation factor GTPase superfamily. Classic translation factor GTPase family. LepA subfamily.

The protein localises to the cell inner membrane. The enzyme catalyses GTP + H2O = GDP + phosphate + H(+). Required for accurate and efficient protein synthesis under certain stress conditions. May act as a fidelity factor of the translation reaction, by catalyzing a one-codon backward translocation of tRNAs on improperly translocated ribosomes. Back-translocation proceeds from a post-translocation (POST) complex to a pre-translocation (PRE) complex, thus giving elongation factor G a second chance to translocate the tRNAs correctly. Binds to ribosomes in a GTP-dependent manner. The chain is Elongation factor 4 from Methylorubrum populi (strain ATCC BAA-705 / NCIMB 13946 / BJ001) (Methylobacterium populi).